Consider the following 292-residue polypeptide: Ribosomal RNA small subunit methyltransferase A (292 aa).

S-adenosyl-L-methionine is bound by residues Asn-29, Leu-31, Gly-56, Glu-77, Asp-102, and Asn-127.

This sequence belongs to the class I-like SAM-binding methyltransferase superfamily. rRNA adenine N(6)-methyltransferase family. RsmA subfamily.

Its subcellular location is the cytoplasm. It carries out the reaction adenosine(1518)/adenosine(1519) in 16S rRNA + 4 S-adenosyl-L-methionine = N(6)-dimethyladenosine(1518)/N(6)-dimethyladenosine(1519) in 16S rRNA + 4 S-adenosyl-L-homocysteine + 4 H(+). In terms of biological role, specifically dimethylates two adjacent adenosines (A1518 and A1519) in the loop of a conserved hairpin near the 3'-end of 16S rRNA in the 30S particle. May play a critical role in biogenesis of 30S subunits. In Bacillus subtilis (strain 168), this protein is Ribosomal RNA small subunit methyltransferase A.